The sequence spans 715 residues: Formate dehydrogenase H (715 aa).

The 56-residue stretch at 1–56 folds into the 4Fe-4S Mo/W bis-MGD-type domain; the sequence is MKKVVTVCPYCASGCKINLVVDNGKIVRAEAAQGKTNQGTLCLKGYYGWDFINDTQ. [4Fe-4S] cluster-binding residues include C8, C11, C15, and C42. Residue K44 is the Electron donor/acceptor of the active site. Residues R110, U140, N176, D179, S180, C201, D202, R204, G221, N223, M297, Q335, D404, T408, Q428, D429, S445, D478, R581, E582, H585, S587, Y678, and K679 each contribute to the Mo-bis(molybdopterin guanine dinucleotide) site. U140 (proton donor/acceptor) is an active-site residue. Residue U140 is a non-standard amino acid, selenocysteine.

It belongs to the prokaryotic molybdopterin-containing oxidoreductase family. Consists of two separable enzymatic activities: a formate dehydrogenase component (FDH-H) and hydrogenase-3. It depends on [4Fe-4S] cluster as a cofactor. Requires Mo-bis(molybdopterin guanine dinucleotide) as cofactor.

It carries out the reaction formate + A + H(+) = AH2 + CO2. With respect to regulation, inhibited by aerobic conditions. In terms of biological role, decomposes formic acid to hydrogen and carbon dioxide under anaerobic conditions in the absence of exogenous electron acceptors. The protein is Formate dehydrogenase H (fdhF) of Escherichia coli (strain K12).